A 270-amino-acid chain; its full sequence is MTGQVRVAVIGASGRMGRALLEACDNHDGIVLGAAIERAGSTLVGVDAGEMAGIGHLGLALVDNLDAVADKFDVLIDFTSPEGTLANLEWCARQGKAIVIGTTGFNHAQKEQVVAFAEETPVVMAPNMSVGVNLMWKLLELAAKVMGDYTDIEIIEGHHRHKKDAPSGTALKMGEVIAQALGRDLEKVAVYGREGITGERDRETIGFATIRAGDLVGEHTAMFADIGERLEITHKASSRMTFANGAMRAAKWLAEQKPGLYDMQQVLGLN.

Residues 11-16 and Glu37 contribute to the NAD(+) site; that span reads GASGRM. Arg38 is an NADP(+) binding site. NAD(+) contacts are provided by residues 101-103 and 125-128; these read GTT and APNM. His158 (proton donor/acceptor) is an active-site residue. His159 serves as a coordination point for (S)-2,3,4,5-tetrahydrodipicolinate. Catalysis depends on Lys162, which acts as the Proton donor. 168 to 169 serves as a coordination point for (S)-2,3,4,5-tetrahydrodipicolinate; that stretch reads GT.

Belongs to the DapB family.

It localises to the cytoplasm. The enzyme catalyses (S)-2,3,4,5-tetrahydrodipicolinate + NAD(+) + H2O = (2S,4S)-4-hydroxy-2,3,4,5-tetrahydrodipicolinate + NADH + H(+). The catalysed reaction is (S)-2,3,4,5-tetrahydrodipicolinate + NADP(+) + H2O = (2S,4S)-4-hydroxy-2,3,4,5-tetrahydrodipicolinate + NADPH + H(+). It functions in the pathway amino-acid biosynthesis; L-lysine biosynthesis via DAP pathway; (S)-tetrahydrodipicolinate from L-aspartate: step 4/4. Its function is as follows. Catalyzes the conversion of 4-hydroxy-tetrahydrodipicolinate (HTPA) to tetrahydrodipicolinate. The chain is 4-hydroxy-tetrahydrodipicolinate reductase from Shewanella amazonensis (strain ATCC BAA-1098 / SB2B).